Here is a 152-residue protein sequence, read N- to C-terminus: Kininogen-1c (152 aa).

The signal sequence occupies residues 1–23 (MRLWFCLSLFIVLCLEHFPGTLA). The span at 28 to 44 (VPESEEKTEQFLRDLPK) shows a compositional bias: basic and acidic residues. Residues 28–152 (VPESEEKTEQ…RGKFHSQSHV (125 aa)) are disordered.

This sequence belongs to the bradykinin-related peptide family. As to expression, expressed by the skin glands.

The protein localises to the secreted. Functionally, potent vasodilator. Binds B1 (BDKRB1) and B2 (BDKRB2) bradykinin receptors. The polypeptide is Kininogen-1c (Bombina maxima (Giant fire-bellied toad)).